The primary structure comprises 846 residues: Homeodomain-interacting protein kinase 1 (846 aa).

The interval 47–74 (NPFSIQKAPGTSSDNEQRAPKRRADEEA) is disordered. Positions 61 to 72 (NEQRAPKRRADE) are enriched in basic and acidic residues. The Protein kinase domain occupies 147–483 (YEVLEFLGKG…PAEGLESKFV (337 aa)). ATP is bound by residues 153-161 (LGKGTFGQV) and K176. D272 functions as the Proton acceptor in the catalytic mechanism. The segment at 741-790 (LAAQPKKNSPAPSVITLSSDEDSNGAGSSNSGSTTRTGAVNPVRNDTLPM) is disordered. Positions 746–757 (KKNSPAPSVITL) are enriched in polar residues. Positions 764–773 (NGAGSSNSGS) are enriched in low complexity.

Belongs to the protein kinase superfamily. CMGC Ser/Thr protein kinase family. HIPK subfamily. Broadly expressed during embryogenesis. Expression becomes more restricted during larval development. L3 larvae display robust expression in many head and motor neurons, and lower levels of expression in the intestine and the seam cells of the hypodermis. By late L4 stage, expression is largely restricted to neurons and is maintained in nerve cells of the head and nerve cord during adulthood. Expressed in adult pharyngeal cells, hypodermal cells, gonadal sheath cells and distal tip cells but not in germline cells. Expressed in serotonergic neurons such as ADF and NSM and in GABAergic neurons, including RME, RIS and DVB.

It localises to the nucleus. It catalyses the reaction L-seryl-[protein] + ATP = O-phospho-L-seryl-[protein] + ADP + H(+). It carries out the reaction L-threonyl-[protein] + ATP = O-phospho-L-threonyl-[protein] + ADP + H(+). In terms of biological role, serine/threonine-protein kinase required in the somatic gonadal cells to regulate germline proliferation during larval development and in adulthood. Plays a role in the development/differentiation of gonadal distal tip cells. Required for normal lifespan in a pha-4 and mxl-2-dependent manner. Also contributes to survival following heat or oxidative stress. Prevents sumoylation and inactivation of heat shock transcription factor hsf-1 which enhances hsf-1-dependent transcriptional induction of chaperones in response to heat shock. Also required for hormetic extension of longevity in response to heat stress. Also contributes to longevity by promoting autophagy under nutrient stress conditions through induction of autophagosome formation and autophagy gene expression. Provides protection against proteotoxic polyglutamine aggregate and the associated locomotory toxicity, probably as a result of kinase activity. Contributes to longevity via gamma-aminobutyric acid (GABA)ergic signaling by promoting autophagy through mxl-2, hlh-30 and daf-16 but independent of hsf-1 and phas-4, to induce autophagosome formation and the expression of autophagy genes. Promotes thermotolerance via serotonergic signaling by serotonergic neurons. Preserves neuronal function in aging animals by mitigating against age-associated decline in axonal and synaptic transmissions. Acts as an activator of nhr-49-dependent hypoxia response, including the up-regulation of fmo-2 and acs-2, the induction of autophagosome formation and expression of autophagy genes. The polypeptide is Homeodomain-interacting protein kinase 1 (Caenorhabditis elegans).